Here is a 156-residue protein sequence, read N- to C-terminus: 6,7-dimethyl-8-ribityllumazine synthase (156 aa).

5-amino-6-(D-ribitylamino)uracil is bound by residues phenylalanine 24, 56–58 (SFE), and 80–82 (AVV). (2S)-2-hydroxy-3-oxobutyl phosphate is bound at residue 85–86 (ET). Histidine 88 (proton donor) is an active-site residue. 5-amino-6-(D-ribitylamino)uracil is bound at residue phenylalanine 113. Arginine 127 serves as a coordination point for (2S)-2-hydroxy-3-oxobutyl phosphate.

This sequence belongs to the DMRL synthase family.

It carries out the reaction (2S)-2-hydroxy-3-oxobutyl phosphate + 5-amino-6-(D-ribitylamino)uracil = 6,7-dimethyl-8-(1-D-ribityl)lumazine + phosphate + 2 H2O + H(+). It participates in cofactor biosynthesis; riboflavin biosynthesis; riboflavin from 2-hydroxy-3-oxobutyl phosphate and 5-amino-6-(D-ribitylamino)uracil: step 1/2. In terms of biological role, catalyzes the formation of 6,7-dimethyl-8-ribityllumazine by condensation of 5-amino-6-(D-ribitylamino)uracil with 3,4-dihydroxy-2-butanone 4-phosphate. This is the penultimate step in the biosynthesis of riboflavin. In Thermococcus kodakarensis (strain ATCC BAA-918 / JCM 12380 / KOD1) (Pyrococcus kodakaraensis (strain KOD1)), this protein is 6,7-dimethyl-8-ribityllumazine synthase.